We begin with the raw amino-acid sequence, 102 residues long: Putative defensin-like protein 152 (102 aa).

The N-terminal stretch at 1-29 (MKKASQLSTTILTIFIVLAIGMMVKGTVG) is a signal peptide. Cystine bridges form between Cys-34–Cys-93, Cys-51–Cys-71, Cys-56–Cys-87, and Cys-60–Cys-89.

It belongs to the DEFL family.

The protein resides in the secreted. The chain is Putative defensin-like protein 152 (LCR11) from Arabidopsis thaliana (Mouse-ear cress).